The primary structure comprises 1456 residues: DNA polymerase gamma, mitochondrial (1456 aa).

The transit peptide at 1–41 (MLTPVRCRTVPNATVATAARVLRRANLFSRYPRQLGHLRWD) directs the protein to the mitochondrion. Disordered stretches follow at residues 1200–1266 (APEM…SLDD) and 1308–1443 (AVTT…SWKP). The segment covering 1204 to 1239 (AAVPSTSSESKSKASATTSTTTTENATASPSSSSNV) has biased composition (low complexity). Over residues 1315–1325 (PEPPTNPPPVA) the composition is skewed to pro residues. 2 stretches are compositionally biased toward low complexity: residues 1346 to 1371 (PKNP…TPKP) and 1411 to 1428 (TASV…ATAT).

The protein belongs to the DNA polymerase type-A family. It depends on Mg(2+) as a cofactor.

It is found in the mitochondrion. It carries out the reaction DNA(n) + a 2'-deoxyribonucleoside 5'-triphosphate = DNA(n+1) + diphosphate. Its function is as follows. Involved in the replication of mitochondrial DNA. The sequence is that of DNA polymerase gamma, mitochondrial (mip-1) from Neurospora crassa (strain ATCC 24698 / 74-OR23-1A / CBS 708.71 / DSM 1257 / FGSC 987).